The following is a 389-amino-acid chain: Protein RAFTIN 1A (389 aa).

The first 20 residues, methionine 1–glycine 20, serve as a signal peptide directing secretion. A compositionally biased stretch (basic and acidic residues) spans aspartate 73 to serine 92. A disordered region spans residues aspartate 73–aspartate 105. The region spanning phenylalanine 169–asparagine 383 is the BURP domain.

In terms of tissue distribution, specifically expressed in anthers, in the tapetum and microspores (at protein level).

Required for pollen development. Probably synthesized in the tapetum, packaged in Ubisch bodies and transported at appropriate stages to the micropsores. The protein is Protein RAFTIN 1A (RAFTIN1A) of Triticum aestivum (Wheat).